Consider the following 72-residue polypeptide: Translation initiation factor IF-1 (72 aa).

Residues M1–R72 form the S1-like domain.

The protein belongs to the IF-1 family. Component of the 30S ribosomal translation pre-initiation complex which assembles on the 30S ribosome in the order IF-2 and IF-3, IF-1 and N-formylmethionyl-tRNA(fMet); mRNA recruitment can occur at any time during PIC assembly.

It is found in the cytoplasm. One of the essential components for the initiation of protein synthesis. Stabilizes the binding of IF-2 and IF-3 on the 30S subunit to which N-formylmethionyl-tRNA(fMet) subsequently binds. Helps modulate mRNA selection, yielding the 30S pre-initiation complex (PIC). Upon addition of the 50S ribosomal subunit IF-1, IF-2 and IF-3 are released leaving the mature 70S translation initiation complex. The polypeptide is Translation initiation factor IF-1 (Haemophilus ducreyi (strain 35000HP / ATCC 700724)).